We begin with the raw amino-acid sequence, 191 residues long: Holliday junction branch migration complex subunit RuvA (191 aa).

Residues 1–64 (MIGRLSGVLL…EDAHILFGFG (64 aa)) are domain I. A domain II region spans residues 65–137 (TNEERNVFKQ…LKGKLGADLG (73 aa)). The segment at 137–141 (GVAGA) is flexible linker. Residues 142–191 (VATDATSDILNALLALGYSDKEAMLALKQVPAGTGVSDGIKLALKSLSKA) are domain III.

This sequence belongs to the RuvA family. As to quaternary structure, homotetramer. Forms an RuvA(8)-RuvB(12)-Holliday junction (HJ) complex. HJ DNA is sandwiched between 2 RuvA tetramers; dsDNA enters through RuvA and exits via RuvB. An RuvB hexamer assembles on each DNA strand where it exits the tetramer. Each RuvB hexamer is contacted by two RuvA subunits (via domain III) on 2 adjacent RuvB subunits; this complex drives branch migration. In the full resolvosome a probable DNA-RuvA(4)-RuvB(12)-RuvC(2) complex forms which resolves the HJ.

The protein resides in the cytoplasm. In terms of biological role, the RuvA-RuvB-RuvC complex processes Holliday junction (HJ) DNA during genetic recombination and DNA repair, while the RuvA-RuvB complex plays an important role in the rescue of blocked DNA replication forks via replication fork reversal (RFR). RuvA specifically binds to HJ cruciform DNA, conferring on it an open structure. The RuvB hexamer acts as an ATP-dependent pump, pulling dsDNA into and through the RuvAB complex. HJ branch migration allows RuvC to scan DNA until it finds its consensus sequence, where it cleaves and resolves the cruciform DNA. The chain is Holliday junction branch migration complex subunit RuvA from Janthinobacterium sp. (strain Marseille) (Minibacterium massiliensis).